A 274-amino-acid chain; its full sequence is Large ribosomal subunit protein uL2 (274 aa).

The segment at 223-256 (VVMNPVDHPHGGGEGKTGEGRHPVDPWGNLTKGY) is disordered. Positions 229–246 (DHPHGGGEGKTGEGRHPV) are enriched in basic and acidic residues.

Belongs to the universal ribosomal protein uL2 family. Part of the 50S ribosomal subunit. Forms a bridge to the 30S subunit in the 70S ribosome.

Its function is as follows. One of the primary rRNA binding proteins. Required for association of the 30S and 50S subunits to form the 70S ribosome, for tRNA binding and peptide bond formation. It has been suggested to have peptidyltransferase activity; this is somewhat controversial. Makes several contacts with the 16S rRNA in the 70S ribosome. In Albidiferax ferrireducens (strain ATCC BAA-621 / DSM 15236 / T118) (Rhodoferax ferrireducens), this protein is Large ribosomal subunit protein uL2.